We begin with the raw amino-acid sequence, 141 residues long: Hemoglobin subunit alpha-1/2 (141 aa).

A Globin domain is found at 1 to 141; it reads VLSPADKANV…VGTVLTSKYR (141 aa). Phosphoserine is present on S3. An N6-succinyllysine mark is found at K7 and K11. Residue K16 is modified to N6-acetyllysine; alternate. Position 16 is an N6-succinyllysine; alternate (K16). Y24 is subject to Phosphotyrosine. At S35 the chain carries Phosphoserine. K40 carries the post-translational modification N6-succinyllysine. Position 49 is a phosphoserine (S49). An O2-binding site is contributed by H58. H87 contacts heme b. A Phosphoserine modification is found at S102. Position 108 is a phosphothreonine (T108). A phosphoserine mark is found at S124 and S131. T134 and T137 each carry phosphothreonine. Residue S138 is modified to Phosphoserine.

The protein belongs to the globin family. Heterotetramer of two alpha chains and two beta chains. Red blood cells.

Functionally, involved in oxygen transport from the lung to the various peripheral tissues. This chain is Hemoglobin subunit alpha-1/2, found in Macroderma gigas (Australian ghost bat).